The chain runs to 634 residues: MNETVANNKETRGFQSEVKQLLHLMIHSLYSNKEIFLRELISNASDAADKLRFQALSNPALYENDAELGVKLSFNEEHNTLTISDNGIGMSREEVISHLGTIAKSGTAEFFSKLSQEQSKDSQLIGQFGVGFYSAFIVADAVTVRTRAAGLSADQAVLWHSAGEGEYTVEDITKESRGTDIILHMREDGKEFLNEWRLRDVIGKYSDHIGIPVSIQTRVRDEEGKETEEVKWEQINKAQALWTRNKSDISDEEYQEFYKHVSHDFADPLLWSHNRVEGKNDYTSLLYIPSKAPWDMMNRDHKSGLKLYVQRVFIMDDAEQFMPSYLRFVRGLIDSNDLPLNVSREILQDNKVTQSLRGACTKRVLTMLERLAKNDTDKYQTFWKEFGLVMKEGPAEDYANREKVASLLRFASTEVDSAEQTVSLESYVERMKEGQDKIYYLTADSYAAAKNSPHLEQFKAKGLEVILMFDRIDEWLMNYLTEFDGKQFQSITKAGLDLSQFEDEQEKEKQKETEQEFQSVVERTKSYLGDRVKEVRTTFKLANTPAVVVTDDFEMGTQMAKLLAAAGQAVPEVKYIFEINPNHTLVKQMADETDEEAFGRWVEVLLGQAMLAERGSMEDPSQFLTAINSLLTKG.

The segment at 1–344 (MNETVANNKE…SNDLPLNVSR (344 aa)) is a; substrate-binding. Positions 345–561 (EILQDNKVTQ…DFEMGTQMAK (217 aa)) are b. The tract at residues 562–634 (LLAAAGQAVP…TAINSLLTKG (73 aa)) is c.

This sequence belongs to the heat shock protein 90 family. Homodimer.

The protein localises to the cytoplasm. Functionally, molecular chaperone. Has ATPase activity. The polypeptide is Chaperone protein HtpG (Vibrio vulnificus (strain CMCP6)).